The sequence spans 180 residues: Large ribosomal subunit protein uL5 (180 aa).

It belongs to the universal ribosomal protein uL5 family. In terms of assembly, part of the 50S ribosomal subunit; part of the 5S rRNA/L5/L18/L25 subcomplex. Contacts the 5S rRNA and the P site tRNA. Forms a bridge to the 30S subunit in the 70S ribosome.

This is one of the proteins that bind and probably mediate the attachment of the 5S RNA into the large ribosomal subunit, where it forms part of the central protuberance. In the 70S ribosome it contacts protein S13 of the 30S subunit (bridge B1b), connecting the 2 subunits; this bridge is implicated in subunit movement. Contacts the P site tRNA; the 5S rRNA and some of its associated proteins might help stabilize positioning of ribosome-bound tRNAs. The polypeptide is Large ribosomal subunit protein uL5 (Heliobacterium modesticaldum (strain ATCC 51547 / Ice1)).